Consider the following 218-residue polypeptide: Pyridoxine/pyridoxamine 5'-phosphate oxidase (218 aa).

Residues 66-71 (RVVLLK), arginine 87, lysine 88, and glutamine 110 contribute to the FMN site. Lysine 71 contributes to the substrate binding site. Substrate is bound by residues tyrosine 128, arginine 132, and serine 136. FMN is bound by residues 145 to 146 (QS) and tryptophan 190. 196-198 (RLH) is a binding site for substrate. Arginine 200 is an FMN binding site.

It belongs to the pyridoxamine 5'-phosphate oxidase family. As to quaternary structure, homodimer. FMN is required as a cofactor.

The enzyme catalyses pyridoxamine 5'-phosphate + O2 + H2O = pyridoxal 5'-phosphate + H2O2 + NH4(+). The catalysed reaction is pyridoxine 5'-phosphate + O2 = pyridoxal 5'-phosphate + H2O2. Its pathway is cofactor metabolism; pyridoxal 5'-phosphate salvage; pyridoxal 5'-phosphate from pyridoxamine 5'-phosphate: step 1/1. It functions in the pathway cofactor metabolism; pyridoxal 5'-phosphate salvage; pyridoxal 5'-phosphate from pyridoxine 5'-phosphate: step 1/1. In terms of biological role, catalyzes the oxidation of either pyridoxine 5'-phosphate (PNP) or pyridoxamine 5'-phosphate (PMP) into pyridoxal 5'-phosphate (PLP). The sequence is that of Pyridoxine/pyridoxamine 5'-phosphate oxidase from Anaplasma marginale (strain St. Maries).